The primary structure comprises 293 residues: Elongation factor Ts (293 aa).

An involved in Mg(2+) ion dislocation from EF-Tu region spans residues 80–83 (TDFV).

The protein belongs to the EF-Ts family.

It localises to the cytoplasm. Associates with the EF-Tu.GDP complex and induces the exchange of GDP to GTP. It remains bound to the aminoacyl-tRNA.EF-Tu.GTP complex up to the GTP hydrolysis stage on the ribosome. In Burkholderia cenocepacia (strain ATCC BAA-245 / DSM 16553 / LMG 16656 / NCTC 13227 / J2315 / CF5610) (Burkholderia cepacia (strain J2315)), this protein is Elongation factor Ts.